We begin with the raw amino-acid sequence, 379 residues long: Homoserine O-acetyltransferase (379 aa).

In terms of domain architecture, AB hydrolase-1 spans 45–355; that stretch reads NAILILHALT…PHGHDAFLIE (311 aa). The active-site Nucleophile is the S151. R220 is a binding site for substrate. Residues D316 and H349 contribute to the active site. D350 is a substrate binding site.

Belongs to the AB hydrolase superfamily. MetX family. As to quaternary structure, homodimer.

The protein resides in the cytoplasm. The catalysed reaction is L-homoserine + acetyl-CoA = O-acetyl-L-homoserine + CoA. The protein operates within amino-acid biosynthesis; L-methionine biosynthesis via de novo pathway; O-acetyl-L-homoserine from L-homoserine: step 1/1. Transfers an acetyl group from acetyl-CoA to L-homoserine, forming acetyl-L-homoserine. This Carboxydothermus hydrogenoformans (strain ATCC BAA-161 / DSM 6008 / Z-2901) protein is Homoserine O-acetyltransferase.